A 140-amino-acid polypeptide reads, in one-letter code: Acyl-coenzyme A thioesterase 13 (140 aa).

N-acetylmethionine is present on M1. T2 is subject to N-acetylthreonine; in Acyl-coenzyme A thioesterase 13, N-terminally processed. 3 positions are modified to N6-acetyllysine: K27, K37, and K43. E46 serves as a coordination point for CoA. 2 residues coordinate substrate: N50 and G81. Residues S83, 90-95, and 108-113 each bind CoA; these read YMSPAK and KQGKTL. An N6-acetyllysine mark is found at K108 and K127. Residue H137 participates in CoA binding.

Belongs to the thioesterase PaaI family. Homotetramer. Interacts with PCTP.

It is found in the cytoplasm. The protein resides in the cytosol. Its subcellular location is the mitochondrion. It localises to the nucleus. The protein localises to the cytoskeleton. It is found in the spindle. It catalyses the reaction a fatty acyl-CoA + H2O = a fatty acid + CoA + H(+). The enzyme catalyses decanoyl-CoA + H2O = decanoate + CoA + H(+). It carries out the reaction octanoyl-CoA + H2O = octanoate + CoA + H(+). The catalysed reaction is butanoyl-CoA + H2O = butanoate + CoA + H(+). It catalyses the reaction hexanoyl-CoA + H2O = hexanoate + CoA + H(+). The enzyme catalyses tetradecanoyl-CoA + H2O = tetradecanoate + CoA + H(+). It carries out the reaction hexadecanoyl-CoA + H2O = hexadecanoate + CoA + H(+). The catalysed reaction is dodecanoyl-CoA + H2O = dodecanoate + CoA + H(+). It catalyses the reaction (9Z)-octadecenoyl-CoA + H2O = (9Z)-octadecenoate + CoA + H(+). The enzyme catalyses (5Z,8Z,11Z,14Z)-eicosatetraenoyl-CoA + H2O = (5Z,8Z,11Z,14Z)-eicosatetraenoate + CoA + H(+). Its function is as follows. Catalyzes the hydrolysis of acyl-CoAs into free fatty acids and coenzyme A (CoASH), regulating their respective intracellular levels. Has acyl-CoA thioesterase activity towards medium (C12) and long-chain (C18) fatty acyl-CoA substrates. Can also hydrolyze 3-hydroxyphenylacetyl-CoA and 3,4-dihydroxyphenylacetyl-CoA (in vitro). May play a role in controlling adaptive thermogenesis. This chain is Acyl-coenzyme A thioesterase 13, found in Homo sapiens (Human).